The following is a 313-amino-acid chain: uncharacterized protein (313 aa).

This is an uncharacterized protein from Treponema pallidum (strain Nichols).